The primary structure comprises 388 residues: Putative nickel insertion protein (388 aa).

It belongs to the LarC family.

This Syntrophobacter fumaroxidans (strain DSM 10017 / MPOB) protein is Putative nickel insertion protein.